We begin with the raw amino-acid sequence, 293 residues long: 4-hydroxy-tetrahydrodipicolinate synthase (293 aa).

Thr-45 contacts pyruvate. Catalysis depends on Tyr-133, which acts as the Proton donor/acceptor. The Schiff-base intermediate with substrate role is filled by Lys-161. Val-203 contributes to the pyruvate binding site.

The protein belongs to the DapA family. In terms of assembly, homotetramer; dimer of dimers.

It localises to the cytoplasm. The enzyme catalyses L-aspartate 4-semialdehyde + pyruvate = (2S,4S)-4-hydroxy-2,3,4,5-tetrahydrodipicolinate + H2O + H(+). Its pathway is amino-acid biosynthesis; L-lysine biosynthesis via DAP pathway; (S)-tetrahydrodipicolinate from L-aspartate: step 3/4. Functionally, catalyzes the condensation of (S)-aspartate-beta-semialdehyde [(S)-ASA] and pyruvate to 4-hydroxy-tetrahydrodipicolinate (HTPA). The chain is 4-hydroxy-tetrahydrodipicolinate synthase from Exiguobacterium sp. (strain ATCC BAA-1283 / AT1b).